The following is a 290-amino-acid chain: 33 kDa chaperonin (290 aa).

Intrachain disulfides connect Cys-235/Cys-237 and Cys-268/Cys-271.

This sequence belongs to the HSP33 family. Under oxidizing conditions two disulfide bonds are formed involving the reactive cysteines. Under reducing conditions zinc is bound to the reactive cysteines and the protein is inactive.

Its subcellular location is the cytoplasm. Functionally, redox regulated molecular chaperone. Protects both thermally unfolding and oxidatively damaged proteins from irreversible aggregation. Plays an important role in the bacterial defense system toward oxidative stress. This chain is 33 kDa chaperonin, found in Streptococcus pneumoniae (strain JJA).